The sequence spans 612 residues: Zinc metalloproteinase-disintegrin-like berythractivase (612 aa).

Positions 1–20 (MIQVLLVIICLEAFPYQGSS) are cleaved as a signal peptide. The propeptide occupies 21 to 187 (IILESGNVND…EPIKKASLLN (167 aa)). The Peptidase M12B domain occupies 200-396 (KYVEFVVVLD…NRPQCLLNKP (197 aa)). Residue E203 coordinates Ca(2+). N260 is a glycosylation site (N-linked (GlcNAc...) asparagine). D287 serves as a coordination point for Ca(2+). Cystine bridges form between C311–C391, C351–C375, and C353–C358. H336 contributes to the Zn(2+) binding site. E337 is an active-site residue. Positions 340 and 346 each coordinate Zn(2+). N-linked (GlcNAc...) asparagine glycosylation is present at N348. A glycan (N-linked (GlcNAc...) asparagine) is linked at N374. Residues C391, N394, V406, N409, L411, E413, E416, and D419 each contribute to the Ca(2+) site. The Disintegrin domain occupies 404 to 490 (PPVCGNELLE…DCPMDDFQRN (87 aa)). 14 cysteine pairs are disulfide-bonded: C407/C436, C418/C431, C420/C426, C430/C453, C444/C450, C449/C475, C462/C482, C469/C501, C494/C506, C513/C563, C528/C574, C541/C551, C558/C600, and C594/C605. The N-linked (GlcNAc...) asparagine glycan is linked to N432. A D/ECD-tripeptide motif is present at residues 468 to 470 (DCD). D470, L471, E473, and D485 together coordinate Ca(2+).

It belongs to the venom metalloproteinase (M12B) family. P-III subfamily. P-IIIa sub-subfamily. Monomer. The cofactor is Zn(2+). In terms of processing, highly glycosylated. In terms of tissue distribution, expressed by the venom gland.

It is found in the secreted. Its activity is regulated as follows. Inhibited by EDTA and o-phenanthroline. Not inhibited by PMSF, benzamidine, irreversible serine-proteinase inhibitors and cysteine proteinase inhibitor E-64. In terms of biological role, potent activator of prothrombin (F2). Does not elicit any hemorrhagic response. Barely inhibits collagen-induced platelet aggregation. Binds neither collagen, nor the jararhagin monoclonal antibody MAJar3. Hydrolyzes the Aalpha-chain of fibrin and fibrinogen, without affecting the Bbeta- and gamma-chains. Is capable of triggering endothelial pro-inflammatory and procoagulant cell responses, but fails to trigger apoptosis. Induces von Willebrand factor release, and the expression of both ICAM1 and E-selectin (SELE) (without increase in VCAM1) in endothelial cells (HUVEC). Is also able to up-regulate the synthesis of the coagulation factor TF (F3). Enhances nitric oxide (NO) generation, prostacyclin production and interleukin-8 release. The polypeptide is Zinc metalloproteinase-disintegrin-like berythractivase (Bothrops erythromelas (Caatinga lance head)).